The chain runs to 319 residues: Type II secretion system protein C 2 (319 aa).

At 1–42 (MARVVFRDARIYLIQWLTKIRHTLNQRQSLNTDKEHLRKIVR) the chain is on the cytoplasmic side. A helical transmembrane segment spans residues 43–65 (GMFWLMLLIISAKVAHSLWRYFS). The Periplasmic segment spans residues 66–319 (FSAEYTAVSP…ARHDISIALR (254 aa)).

It belongs to the GSP C family. As to quaternary structure, interacts with outer cell membrane protein GspD2 in the periplasm.

The protein resides in the cell inner membrane. In terms of biological role, involved in a type II secretion system (T2SS, formerly general secretion pathway, GSP) for the export of folded proteins across the outer membrane. This is Type II secretion system protein C 2 (gspC2) from Escherichia coli O78:H11 (strain H10407 / ETEC).